A 525-amino-acid chain; its full sequence is Sodium-dependent lysophosphatidylcholine symporter 1 (525 aa).

Residues 1-29 are disordered; that stretch reads MEKESENASCAGLLGQKNEPGSPTQSRSG. Residues 1 to 32 lie on the Cytoplasmic side of the membrane; that stretch reads MEKESENASCAGLLGQKNEPGSPTQSRSGKHK. Residues 33–62 form a helical membrane-spanning segment; it reads LSVCSKICFAIGGAPYQITGCALGFFLQIF. Topologically, residues 63–73 are extracellular; the sequence is LLDIAQVPPFY. The chain crosses the membrane as a helical span at residues 74–94; the sequence is ASIILFSGRVWDAITDPLVGF. The Cytoplasmic portion of the chain corresponds to 95–106; the sequence is FVSKSSWTRLGR. A helical membrane pass occupies residues 107-126; it reads LLPWVVFSTPFAVVSYLLIW. At 127–137 the chain is on the extracellular side; sequence FVPGFSGVSMV. Residues 138 to 162 traverse the membrane as a helical segment; that stretch reads IWYLVFYCLFQTLVTCFHVPYSALT. Over 163 to 169 the chain is Cytoplasmic; the sequence is MFISKEQ. A helical transmembrane segment spans residues 170–201; that stretch reads SDRDSATGYRMTVEVLGTVLGTAIQGQIVGRE. Residues 202–226 are Extracellular-facing; sequence NTPCVEHIRETHLYNTSVIMEDLNI. Cys205 and Cys458 form a disulfide bridge. N-linked (GlcNAc...) asparagine glycans are attached at residues Asn216 and Asn225. Residues 227–260 form a helical membrane-spanning segment; that stretch reads THDVESLSSTRDAYMIAAGVICAIYVLCAIILTL. Residues 261–291 are Cytoplasmic-facing; that stretch reads GVREKRDAYELLSDQPFSFWQGLKLVMSHKP. Residues 292–318 form a helical membrane-spanning segment; it reads YIKLITGFLFTSLAFMLLEGNFALFLT. At 319 to 329 the chain is on the extracellular side; the sequence is YTMGFRRDFQN. The chain crosses the membrane as a helical span at residues 330 to 348; sequence ILLVVMLSATLTVPFWQWF. The Cytoplasmic segment spans residues 349-352; the sequence is LTRF. The helical transmembrane segment at 353–374 threads the bilayer; it reads GKKTAVYFGISSVIPFLILVVL. Over 375-377 the chain is Extracellular; it reads MES. The helical transmembrane segment at 378 to 414 threads the bilayer; the sequence is NLILAYVVAVAAGLSVAAAFLLPWSMLPDVIDDFILK. Residues 415–424 lie on the Cytoplasmic side of the membrane; sequence NPDSHGHEPI. Residues 425 to 451 form a helical membrane-spanning segment; sequence FFSFYVFFTKFASGVSLGISTLSLDFA. The Extracellular segment spans residues 452-463; the sequence is GYQTRACSQPEQ. A helical membrane pass occupies residues 464 to 487; sequence VNLTLKMLICVAPVILILLGLLLF. The Cytoplasmic segment spans residues 488–525; it reads ILYPINEEKRKQNKKALQLIRESNRDSDSDSLELASNV.

It belongs to the major facilitator superfamily.

The protein resides in the cell membrane. Its subcellular location is the endoplasmic reticulum membrane. The catalysed reaction is a 1-acyl-sn-glycero-3-phosphocholine(in) + Na(+)(in) = a 1-acyl-sn-glycero-3-phosphocholine(out) + Na(+)(out). It catalyses the reaction 1-(4Z,7Z,10Z,13Z,16Z,19Z-docosahexaenoyl)-sn-glycero-3-phosphocholine(in) + Na(+)(in) = 1-(4Z,7Z,10Z,13Z,16Z,19Z-docosahexaenoyl)-sn-glycero-3-phosphocholine(out) + Na(+)(out). The enzyme catalyses 1-(9Z-octadecenoyl)-sn-glycero-3-phosphocholine(in) + Na(+)(in) = 1-(9Z-octadecenoyl)-sn-glycero-3-phosphocholine(out) + Na(+)(out). It carries out the reaction 1-hexadecanoyl-sn-glycero-3-phosphocholine(in) + Na(+)(in) = 1-hexadecanoyl-sn-glycero-3-phosphocholine(out) + Na(+)(out). The catalysed reaction is a 1-acyl-sn-glycero-3-phosphoethanolamine(in) + Na(+)(in) = a 1-acyl-sn-glycero-3-phosphoethanolamine(out) + Na(+)(out). Functionally, sodium-dependent lysophosphatidylcholine (LPC) symporter, which plays an essential role for blood-brain barrier formation and function. Specifically expressed in endothelium of the blood-brain barrier of micro-vessels and transports LPC into the brain. Transport of LPC is essential because it constitutes the major mechanism by which docosahexaenoic acid (DHA), an omega-3 fatty acid that is essential for normal brain growth and cognitive function, enters the brain. Transports LPC carrying long-chain fatty acids such LPC oleate and LPC palmitate with a minimum acyl chain length of 14 carbons. Does not transport docosahexaenoic acid in unesterified fatty acid. This is Sodium-dependent lysophosphatidylcholine symporter 1 (mfsd2a) from Xenopus tropicalis (Western clawed frog).